The chain runs to 499 residues: MIVEMTGIHKSFSGNPVLKDVSFTLEKGEIHALMGENGAGKSTLMKILTGIYERDSGTVKIKGREVHYKHPKEAEADGLAVIHQELNILPELTVAENLFVGKERTYGKTGWIKSKEMNRLAEEKLAELGLKVKGTERAGNLSVGKQQLIEIAKALMTNADIIIMDEPTAALTDREIDTLFATVRELQKKGVTFVYISHRMEEIFSLCQRITVLRDGEYVGTKVIAETSFDEIVKMMVGRALGNRFPEHTLTPGDVKLEIKHLTRAGEFENVSLSVRAGEILGISGLMGAGRSELVETIFGYRKADSGEVWIDGKQAAIKGPDQAIAQGIGFVSEDRKSKGLIVDFSIRDNISLTNLSRISTSSWISSEKERSLYEELAKKLHVKASGPSQQAKSLSGGNQQKIVIAKWLGIEPKILILDEPTRGVDVGAKKEIYTIMNELAKQGVAIIMVSSELPEVIGLSTRVAVMFEGKLMHILERDELSEETIMHYATGGDKHVRQ.

ABC transporter domains follow at residues 3 to 240 (VEMT…VGRA) and 250 to 494 (LTPG…TGGD). 35–42 (GENGAGKS) serves as a coordination point for ATP.

Belongs to the ABC transporter superfamily. Ribose importer (TC 3.A.1.2.1) family. The complex is composed of an ATP-binding protein (RbsA), two transmembrane proteins (RbsC) and a solute-binding protein (RbsB).

It is found in the cell membrane. The catalysed reaction is D-ribose(out) + ATP + H2O = D-ribose(in) + ADP + phosphate + H(+). Functionally, part of the ABC transporter complex RbsABC involved in ribose import. Responsible for energy coupling to the transport system. The chain is Ribose import ATP-binding protein RbsA from Halalkalibacterium halodurans (strain ATCC BAA-125 / DSM 18197 / FERM 7344 / JCM 9153 / C-125) (Bacillus halodurans).